Here is a 925-residue protein sequence, read N- to C-terminus: MWNKHRLAFILVGLLFHLFYLRSIFDIYFVSPLVHGMRQFKSNEEPPAKRLFLIVGDGLRADTSFDKVKHPVTGKTEFLAPYLRSLVEHNATYGISHTRMPTESRPGHVAMIAGFYEDVSAVTKGWKENPVDFDSVFNQSTHTYSFGSPDILPMFKSGASDPTKVDAWMYGHEFEDFTQSSIELDAYVFRHMDALFRNATVDSKLRHEMMQDGNVFFLHLLGCDTAGHSYRPYSAEYYDNVKYIDSQLERLVPKVREFFGDDDTAFVFTADHGMSAFGSHGDGHPNNTRTPLVAWGAGLNRPVLNDVPVYDNYTENWDLAHVRRNDVNQADIASLMSYLIGLNYPTNSVGELPLAYVNGTERTKLNALYKNALSILEQYLVKETEMIQSQLVYKEYPKFAQKSHSSYIQEIEHLIDRIANGEEDLEPEAIALSEELMKTALEGLQYLTTYNWRFIRSIVTLGFIGWITYSFTIFLRLFILEKQYAMKTSPQNLASFGALTAALNYVLYYQRSPFNYYMYLLFPLFFWSQILTNSTILHDGIREMFKGVSMLQRIGICALIVSIYEGIVYGYFDRWIFTIIFNLLALYPFFCGIKDAKTNMFWGANSMALSIFTLFDAVKIESLTQINVSGLLLVASGLYALWRVSKKINSHTKIVILLQILLLAMMLAVTNKSVTSLQQRAGLPTDAKIAGWVILTLSLSLMPLLHYLKPSNDYQVRVLVIYLTFAPTFLILTISFESFFYLLFTNYLMLWIEIESKIKAQNIAKNSQNWLQLLRISIIGFFLLQFAFFGTGNVASISSFSLDSVYRLMPVFDPFPMGALLILKIMIPYILLSTALGIMNLKLNIKDYTVSSLILSTSDVLSLNFFYLLRTEGSWLDIGVTISNYCLAILSSLFMIVLELFSHFLLKNVRDNGMDIAASKQQKRH.

The Cytoplasmic portion of the chain corresponds to 1–6; the sequence is MWNKHR. Residues 7 to 27 traverse the membrane as a helical segment; the sequence is LAFILVGLLFHLFYLRSIFDI. At 28 to 457 the chain is on the lumenal side; it reads YFVSPLVHGM…TTYNWRFIRS (430 aa). N90, N138, N198, N286, N312, and N358 each carry an N-linked (GlcNAc...) asparagine glycan. Residues 458–478 form a helical membrane-spanning segment; sequence IVTLGFIGWITYSFTIFLRLF. Over 479 to 492 the chain is Cytoplasmic; it reads ILEKQYAMKTSPQN. The helical transmembrane segment at 493–510 threads the bilayer; that stretch reads LASFGALTAALNYVLYYQ. Over 511–516 the chain is Lumenal; the sequence is RSPFNY. The helical transmembrane segment at 517–537 threads the bilayer; the sequence is YMYLLFPLFFWSQILTNSTIL. At 538 to 547 the chain is on the cytoplasmic side; the sequence is HDGIREMFKG. Residues 548–568 traverse the membrane as a helical segment; it reads VSMLQRIGICALIVSIYEGIV. The Lumenal segment spans residues 569-574; sequence YGYFDR. A helical membrane pass occupies residues 575–595; it reads WIFTIIFNLLALYPFFCGIKD. Residues 596 to 599 are Cytoplasmic-facing; that stretch reads AKTN. Residues 600 to 620 form a helical membrane-spanning segment; sequence MFWGANSMALSIFTLFDAVKI. Position 621 (E621) is a topological domain, lumenal. The helical transmembrane segment at 622–642 threads the bilayer; it reads SLTQINVSGLLLVASGLYALW. Residues 643 to 653 lie on the Cytoplasmic side of the membrane; sequence RVSKKINSHTK. The chain crosses the membrane as a helical span at residues 654–674; it reads IVILLQILLLAMMLAVTNKSV. At 675 to 687 the chain is on the lumenal side; the sequence is TSLQQRAGLPTDA. The helical transmembrane segment at 688–708 threads the bilayer; sequence KIAGWVILTLSLSLMPLLHYL. Topologically, residues 709–719 are cytoplasmic; the sequence is KPSNDYQVRVL. A helical transmembrane segment spans residues 720–740; sequence VIYLTFAPTFLILTISFESFF. The Lumenal segment spans residues 741-775; sequence YLLFTNYLMLWIEIESKIKAQNIAKNSQNWLQLLR. The helical transmembrane segment at 776-796 threads the bilayer; the sequence is ISIIGFFLLQFAFFGTGNVAS. Over 797–818 the chain is Cytoplasmic; sequence ISSFSLDSVYRLMPVFDPFPMG. Residues 819–839 form a helical membrane-spanning segment; the sequence is ALLILKIMIPYILLSTALGIM. Topologically, residues 840-848 are lumenal; that stretch reads NLKLNIKDY. The helical transmembrane segment at 849–869 threads the bilayer; sequence TVSSLILSTSDVLSLNFFYLL. At 870 to 885 the chain is on the cytoplasmic side; that stretch reads RTEGSWLDIGVTISNY. The helical transmembrane segment at 886-906 threads the bilayer; it reads CLAILSSLFMIVLELFSHFLL. At 907 to 925 the chain is on the lumenal side; sequence KNVRDNGMDIAASKQQKRH.

Belongs to the PIGG/PIGN/PIGO family. PIGN subfamily.

The protein localises to the endoplasmic reticulum membrane. The protein operates within glycolipid biosynthesis; glycosylphosphatidylinositol-anchor biosynthesis. Functionally, ethanolamine phosphate transferase involved in glycosylphosphatidylinositol-anchor biosynthesis. Transfers ethanolamine phosphate to the first alpha-1,4-linked mannose of the glycosylphosphatidylinositol precursor of GPI-anchor. The protein is GPI ethanolamine phosphate transferase 1 (MCD4) of Eremothecium gossypii (strain ATCC 10895 / CBS 109.51 / FGSC 9923 / NRRL Y-1056) (Yeast).